Consider the following 530-residue polypeptide: Autoinducer-2 kinase (530 aa).

It belongs to the FGGY kinase family.

It is found in the cytoplasm. The enzyme catalyses (S)-4,5-dihydroxypentane-2,3-dione + ATP = (2S)-2-hydroxy-3,4-dioxopentyl phosphate + ADP + H(+). Its function is as follows. Catalyzes the phosphorylation of autoinducer-2 (AI-2) to phospho-AI-2, which subsequently inactivates the transcriptional regulator LsrR and leads to the transcription of the lsr operon. Phosphorylates the ring-open form of (S)-4,5-dihydroxypentane-2,3-dione (DPD), which is the precursor to all AI-2 signaling molecules, at the C5 position. The polypeptide is Autoinducer-2 kinase (Salmonella paratyphi A (strain ATCC 9150 / SARB42)).